The chain runs to 196 residues: GTP cyclohydrolase-2 (196 aa).

Residue 49 to 53 (RIHSE) coordinates GTP. The Zn(2+) site is built by Cys-54, Cys-65, and Cys-67. GTP is bound by residues Gln-70, 92 to 94 (EGR), and Thr-114. The Proton acceptor role is filled by Asp-126. Catalysis depends on Arg-128, which acts as the Nucleophile. Positions 149 and 154 each coordinate GTP.

The protein belongs to the GTP cyclohydrolase II family. As to quaternary structure, homodimer. It depends on Zn(2+) as a cofactor.

It carries out the reaction GTP + 4 H2O = 2,5-diamino-6-hydroxy-4-(5-phosphoribosylamino)-pyrimidine + formate + 2 phosphate + 3 H(+). Its pathway is cofactor biosynthesis; riboflavin biosynthesis; 5-amino-6-(D-ribitylamino)uracil from GTP: step 1/4. In terms of biological role, catalyzes the conversion of GTP to 2,5-diamino-6-ribosylamino-4(3H)-pyrimidinone 5'-phosphate (DARP), formate and pyrophosphate. The chain is GTP cyclohydrolase-2 from Buchnera aphidicola subsp. Schizaphis graminum (strain Sg).